Here is a 59-residue protein sequence, read N- to C-terminus: Large ribosomal subunit protein eL37 (59 aa).

4 residues coordinate Zn(2+): C20, C23, C35, and C38. The segment at 20 to 38 (CRRCGRHSFHRRKGYCAAC) adopts a C4-type zinc-finger fold.

This sequence belongs to the eukaryotic ribosomal protein eL37 family. It depends on Zn(2+) as a cofactor.

Binds to the 23S rRNA. This is Large ribosomal subunit protein eL37 (rpl37e) from Archaeoglobus fulgidus (strain ATCC 49558 / DSM 4304 / JCM 9628 / NBRC 100126 / VC-16).